The following is a 101-amino-acid chain: NADH-quinone oxidoreductase subunit K (101 aa).

3 helical membrane-spanning segments follow: residues 4-24 (LAHFLVLGAILFAISIVGIFL), 30-50 (IVLLMAIELMLLAVNINFVAF), and 61-81 (VFVFFILTVAAAESAIGLAIL).

This sequence belongs to the complex I subunit 4L family. As to quaternary structure, NDH-1 is composed of 14 different subunits. Subunits NuoA, H, J, K, L, M, N constitute the membrane sector of the complex.

The protein resides in the cell inner membrane. The catalysed reaction is a quinone + NADH + 5 H(+)(in) = a quinol + NAD(+) + 4 H(+)(out). NDH-1 shuttles electrons from NADH, via FMN and iron-sulfur (Fe-S) centers, to quinones in the respiratory chain. The immediate electron acceptor for the enzyme in this species is believed to be ubiquinone. Couples the redox reaction to proton translocation (for every two electrons transferred, four hydrogen ions are translocated across the cytoplasmic membrane), and thus conserves the redox energy in a proton gradient. This is NADH-quinone oxidoreductase subunit K from Cupriavidus taiwanensis (strain DSM 17343 / BCRC 17206 / CCUG 44338 / CIP 107171 / LMG 19424 / R1) (Ralstonia taiwanensis (strain LMG 19424)).